The chain runs to 89 residues: Small ribosomal subunit protein uS15 (89 aa).

Belongs to the universal ribosomal protein uS15 family. As to quaternary structure, part of the 30S ribosomal subunit. Forms a bridge to the 50S subunit in the 70S ribosome, contacting the 23S rRNA.

Its function is as follows. One of the primary rRNA binding proteins, it binds directly to 16S rRNA where it helps nucleate assembly of the platform of the 30S subunit by binding and bridging several RNA helices of the 16S rRNA. Functionally, forms an intersubunit bridge (bridge B4) with the 23S rRNA of the 50S subunit in the ribosome. This is Small ribosomal subunit protein uS15 from Chelativorans sp. (strain BNC1).